A 285-amino-acid polypeptide reads, in one-letter code: GTP-binding protein 8 (285 aa).

An EngB-type G domain is found at 110–283 (RQPEVCFIGR…KCFIADITGS (174 aa)). Residues 118 to 125 (GRSNVGKS), 147 to 151 (GHTKK), 165 to 168 (DMPG), 227 to 230 (TKID), and 262 to 264 (ISA) each bind GTP. Mg(2+) is bound by residues Ser125 and Thr149.

The protein belongs to the TRAFAC class TrmE-Era-EngA-EngB-Septin-like GTPase superfamily. EngB GTPase family. The cofactor is Mg(2+).

This is GTP-binding protein 8 (Gtpbp8) from Rattus norvegicus (Rat).